The primary structure comprises 337 residues: Fructose-1,6-bisphosphatase class 1 (337 aa).

Glu94, Asp116, Leu118, and Asp119 together coordinate Mg(2+). Substrate contacts are provided by residues 119–122 (DGSS), Asn210, and Lys276. Glu282 serves as a coordination point for Mg(2+).

Belongs to the FBPase class 1 family. As to quaternary structure, homotetramer. The cofactor is Mg(2+).

It localises to the cytoplasm. It catalyses the reaction beta-D-fructose 1,6-bisphosphate + H2O = beta-D-fructose 6-phosphate + phosphate. The protein operates within carbohydrate biosynthesis; gluconeogenesis. This Burkholderia orbicola (strain MC0-3) protein is Fructose-1,6-bisphosphatase class 1.